A 98-amino-acid chain; its full sequence is Large ribosomal subunit protein uL23 (98 aa).

This sequence belongs to the universal ribosomal protein uL23 family. As to quaternary structure, part of the 50S ribosomal subunit. Contacts protein L29, and trigger factor when it is bound to the ribosome.

One of the early assembly proteins it binds 23S rRNA. One of the proteins that surrounds the polypeptide exit tunnel on the outside of the ribosome. Forms the main docking site for trigger factor binding to the ribosome. The protein is Large ribosomal subunit protein uL23 of Clostridium acetobutylicum (strain ATCC 824 / DSM 792 / JCM 1419 / IAM 19013 / LMG 5710 / NBRC 13948 / NRRL B-527 / VKM B-1787 / 2291 / W).